A 321-amino-acid polypeptide reads, in one-letter code: Protein ZAR1-like (321 aa).

The segment at 110–214 is disordered; that stretch reads RTLSSCSPWD…GDAASEPLRR (105 aa). Over residues 145–154 the composition is skewed to basic and acidic residues; the sequence is LRRDGDEAES. Residues 222 to 307 form a 3CxxC-type zinc finger; that stretch reads PKYGYFHCKD…QELCGRCKDK (86 aa).

It belongs to the ZAR1 family. As to quaternary structure, interacts with YBX2.

Its subcellular location is the cytoplasm. The protein localises to the cytoplasmic ribonucleoprotein granule. Functionally, mRNA-binding protein required for maternal mRNA storage, translation and degradation during oocyte maturation. Probably promotes formation of some phase-separated membraneless compartment that stores maternal mRNAs in oocytes: acts by undergoing liquid-liquid phase separation upon binding to maternal mRNAs. Binds to the 3'-UTR of maternal mRNAs, inhibiting their translation. The sequence is that of Protein ZAR1-like from Homo sapiens (Human).